The primary structure comprises 125 residues: Probable 4-amino-4-deoxy-L-arabinose-phosphoundecaprenol flippase subunit ArnF (125 aa).

Over 1 to 2 (MG) the chain is Cytoplasmic. The helical transmembrane segment at 3–23 (VMWGLISVAIASLAQLSLGFA) threads the bilayer. Topologically, residues 24-33 (MMRLPSIAHP) are periplasmic. A helical membrane pass occupies residues 34-54 (LAFISGLGAFNAATLALFAGL). Topologically, residues 55-76 (AGYLVSVFCWQKTLHMLALSKA) are cytoplasmic. A helical transmembrane segment spans residues 77-97 (YALLSLSYVLVWVASMLLPGL). Topologically, residues 98–100 (QGA) are periplasmic. A helical membrane pass occupies residues 101–121 (FSLKAMLGVLCIMAGVMLIFL). Residues 122 to 125 (PARS) lie on the Cytoplasmic side of the membrane.

The protein belongs to the ArnF family. Heterodimer of ArnE and ArnF.

The protein localises to the cell inner membrane. Its pathway is bacterial outer membrane biogenesis; lipopolysaccharide biosynthesis. Its function is as follows. Translocates 4-amino-4-deoxy-L-arabinose-phosphoundecaprenol (alpha-L-Ara4N-phosphoundecaprenol) from the cytoplasmic to the periplasmic side of the inner membrane. The polypeptide is Probable 4-amino-4-deoxy-L-arabinose-phosphoundecaprenol flippase subunit ArnF (Salmonella paratyphi A (strain ATCC 9150 / SARB42)).